Consider the following 1130-residue polypeptide: DNA-directed RNA polymerase I subunit rpa2 (1130 aa).

The C4-type zinc-finger motif lies at 1070–1096; it reads CKLCGSTLTIYSKKDYSNQTVSECKSC.

Belongs to the RNA polymerase beta chain family. As to quaternary structure, component of the RNA polymerase I (Pol I) complex consisting of 14 subunits.

The protein resides in the nucleus. It is found in the nucleolus. It catalyses the reaction RNA(n) + a ribonucleoside 5'-triphosphate = RNA(n+1) + diphosphate. DNA-dependent RNA polymerase catalyzes the transcription of DNA into RNA using the four ribonucleoside triphosphates as substrates. Second largest core component of RNA polymerase I which synthesizes ribosomal RNA precursors. Proposed to contribute to the polymerase catalytic activity and forms the polymerase active center together with the largest subunit. Pol I is composed of mobile elements and RPA2 is part of the core element with the central large cleft and probably a clamp element that moves to open and close the cleft. In Dictyostelium discoideum (Social amoeba), this protein is DNA-directed RNA polymerase I subunit rpa2 (polr1b).